The sequence spans 185 residues: Ribosome-recycling factor (185 aa).

The protein belongs to the RRF family.

The protein localises to the cytoplasm. Responsible for the release of ribosomes from messenger RNA at the termination of protein biosynthesis. May increase the efficiency of translation by recycling ribosomes from one round of translation to another. The sequence is that of Ribosome-recycling factor from Pseudomonas aeruginosa (strain LESB58).